The sequence spans 337 residues: Membrane-spanning 4-domains subfamily A member 18 (337 aa).

Residues 101 to 121 (LGTTDLQTQPGGPQNPPTCAP) form a disordered region. 4 helical membrane-spanning segments follow: residues 155-175 (LGAIQILIGLTHIFTAINPSL), 183-203 (AISGYLVWGGIFFIISGSLSV), 220-240 (MNVVSAIVSLAGVLLLLVDLI), and 252-272 (GGLLPFVLLEFCLTCVVSHFG).

This sequence belongs to the MS4A family.

The protein resides in the membrane. The polypeptide is Membrane-spanning 4-domains subfamily A member 18 (MS4A18) (Bos taurus (Bovine)).